The primary structure comprises 371 residues: Barbiturase 2 (371 aa).

Residues 1 to 104 (MTRPIEVRKV…TIFAYAPEGR (104 aa)) are RU A. Residues Arg53 and 83–84 (SG) contribute to the substrate site. An RU B region spans residues 112–247 (RVTVGYAMSE…AQIVVVGNAR (136 aa)). Lys162 is an active-site residue. Substrate contacts are provided by residues Asn194 and 230-231 (SS). Catalysis depends on Ser230, which acts as the Nucleophile. The segment at 253-371 (FRVGHSIMKD…PVIAIVDLEA (119 aa)) is RU C. Glu303 contributes to the Mg(2+) binding site. Substrate is bound by residues Lys330 and 349–350 (SV). Positions 352, 355, 356, 357, and 360 each coordinate Mg(2+).

Belongs to the cyclic amide hydrolase (CyAH) family. Homotetramer.

The catalysed reaction is barbiturate + H2O = 3-oxo-3-ureidopropanoate. It participates in pyrimidine metabolism; uracil degradation via oxidative pathway; malonate and urea from uracil: step 2/3. Its function is as follows. Responsible for the hydrolysis of barbituric acid (2,4,6-trihydroxy-1,3-pyrimidine), an intermediate in the oxidative catabolism of pyrimidines. Catalyzes the hydrolytic opening of the pyrimidine ring of barbituric acid to yield ureidomalonic acid. Can also use cyanuric acid as a substrate, albeit with lower efficiency. This chain is Barbiturase 2, found in Nocardioides sp. (strain ATCC BAA-499 / JS614).